A 381-amino-acid chain; its full sequence is Dual-specificity RNA methyltransferase RlmN (381 aa).

Glu95 acts as the Proton acceptor in catalysis. Residues 101-347 (EDDRGTLCVS…TTVRKTRGDD (247 aa)) form the Radical SAM core domain. Cysteines 108 and 352 form a disulfide. [4Fe-4S] cluster is bound by residues Cys115, Cys119, and Cys122. S-adenosyl-L-methionine contacts are provided by residues 178–179 (GE), Ser210, 232–234 (SLH), and Asn309. The active-site S-methylcysteine intermediate is Cys352.

This sequence belongs to the radical SAM superfamily. RlmN family. [4Fe-4S] cluster serves as cofactor.

Its subcellular location is the cytoplasm. The enzyme catalyses adenosine(2503) in 23S rRNA + 2 reduced [2Fe-2S]-[ferredoxin] + 2 S-adenosyl-L-methionine = 2-methyladenosine(2503) in 23S rRNA + 5'-deoxyadenosine + L-methionine + 2 oxidized [2Fe-2S]-[ferredoxin] + S-adenosyl-L-homocysteine. It carries out the reaction adenosine(37) in tRNA + 2 reduced [2Fe-2S]-[ferredoxin] + 2 S-adenosyl-L-methionine = 2-methyladenosine(37) in tRNA + 5'-deoxyadenosine + L-methionine + 2 oxidized [2Fe-2S]-[ferredoxin] + S-adenosyl-L-homocysteine. In terms of biological role, specifically methylates position 2 of adenine 2503 in 23S rRNA and position 2 of adenine 37 in tRNAs. m2A2503 modification seems to play a crucial role in the proofreading step occurring at the peptidyl transferase center and thus would serve to optimize ribosomal fidelity. The protein is Dual-specificity RNA methyltransferase RlmN of Bordetella petrii (strain ATCC BAA-461 / DSM 12804 / CCUG 43448).